Reading from the N-terminus, the 209-residue chain is Uracil phosphoribosyltransferase (209 aa).

5-phospho-alpha-D-ribose 1-diphosphate contacts are provided by residues R79, R104, and 131 to 139; that span reads DPMLATGGS. Uracil-binding positions include I194 and 199–201; that span reads GDA. D200 contributes to the 5-phospho-alpha-D-ribose 1-diphosphate binding site.

It belongs to the UPRTase family. Mg(2+) is required as a cofactor.

It carries out the reaction UMP + diphosphate = 5-phospho-alpha-D-ribose 1-diphosphate + uracil. It functions in the pathway pyrimidine metabolism; UMP biosynthesis via salvage pathway; UMP from uracil: step 1/1. With respect to regulation, allosterically activated by GTP. In terms of biological role, catalyzes the conversion of uracil and 5-phospho-alpha-D-ribose 1-diphosphate (PRPP) to UMP and diphosphate. This chain is Uracil phosphoribosyltransferase, found in Streptococcus suis (strain 05ZYH33).